Here is a 301-residue protein sequence, read N- to C-terminus: GTP cyclohydrolase FolE2 (301 aa).

Belongs to the GTP cyclohydrolase IV family.

The catalysed reaction is GTP + H2O = 7,8-dihydroneopterin 3'-triphosphate + formate + H(+). The protein operates within cofactor biosynthesis; 7,8-dihydroneopterin triphosphate biosynthesis; 7,8-dihydroneopterin triphosphate from GTP: step 1/1. In terms of biological role, converts GTP to 7,8-dihydroneopterin triphosphate. This is GTP cyclohydrolase FolE2 from Pseudomonas syringae pv. syringae (strain B728a).